Here is a 226-residue protein sequence, read N- to C-terminus: UPF0319 protein YPO1442/y2728/YP_1333 (226 aa).

A signal peptide spans 1–20 (MKLGLVAGMLAVCFSFSSVA).

Belongs to the UPF0319 family.

In Yersinia pestis, this protein is UPF0319 protein YPO1442/y2728/YP_1333.